A 277-amino-acid chain; its full sequence is MDNAVDRHVFYISDGTAITAEVLGHAVMSQFPVTISSITLPFVENESRARAVKDQIDAIYHQTGVRPLVFYSIVLPEIRAIILQSEGFCQDIVQALVAPLQQEMKLDPTPIAHRTHGLNPNNLNKYDARIAAIDYTLAHDDGISLRNLDQAQVILLGVSRCGKTPTSLYLAMQFGIRAANYPFIADDMDNLVLPASLKPLQHKLFGLTIDPERLAAIREERRENSRYASLRQCRMEVAEVEALYRKNQIPWINSTNYSVEEIATKILDIMGLSRRMY.

157–164 (GVSRCGKT) contacts ADP.

This sequence belongs to the pyruvate, phosphate/water dikinase regulatory protein family. PSRP subfamily.

The catalysed reaction is [pyruvate, water dikinase] + ADP = [pyruvate, water dikinase]-phosphate + AMP + H(+). It carries out the reaction [pyruvate, water dikinase]-phosphate + phosphate + H(+) = [pyruvate, water dikinase] + diphosphate. Its function is as follows. Bifunctional serine/threonine kinase and phosphorylase involved in the regulation of the phosphoenolpyruvate synthase (PEPS) by catalyzing its phosphorylation/dephosphorylation. This is Phosphoenolpyruvate synthase regulatory protein from Escherichia coli O1:K1 / APEC.